The primary structure comprises 121 residues: Dihydroneopterin aldolase (121 aa).

Positions 25 and 114 each coordinate substrate.

It belongs to the archaeal dihydroneopterin aldolase family. Homotetramer.

The enzyme catalyses 7,8-dihydroneopterin = 6-hydroxymethyl-7,8-dihydropterin + glycolaldehyde. The protein operates within cofactor biosynthesis; 5,6,7,8-tetrahydromethanopterin biosynthesis. Its function is as follows. Catalyzes the conversion of 7,8-dihydroneopterin (H2Neo) to 6-hydroxymethyl-7,8-dihydropterin (6-HMD). This Methanocaldococcus jannaschii (strain ATCC 43067 / DSM 2661 / JAL-1 / JCM 10045 / NBRC 100440) (Methanococcus jannaschii) protein is Dihydroneopterin aldolase.